The chain runs to 715 residues: Serrate RNA effector molecule homolog (715 aa).

Disordered regions lie at residues 1 to 87 (MDSD…YSGP), 223 to 259 (ENKD…TDKA), and 629 to 715 (EPKH…DDIP). 3 stretches are compositionally biased toward basic and acidic residues: residues 7-25 (GDRR…DSYR), 37-57 (YDNK…SRGD), and 223-242 (ENKD…VKEE). The span at 243–256 (PNEEQEEGAIDDET) shows a compositional bias: acidic residues. Positions 629-659 (EPKHMPHMSRDDHRGGGGDRGYGRERDDDRG) are enriched in basic and acidic residues.

Belongs to the ARS2 family.

Its subcellular location is the nucleus. In terms of biological role, acts as a mediator between the cap-binding complex (CBC) and the primary microRNAs (miRNAs) processing machinery. Contributes to the stability and delivery of capped primary miRNA transcripts to the primary miRNA processing complex, thereby playing a role in RNA-mediated gene silencing (RNAi) by miRNAs. This is Serrate RNA effector molecule homolog from Caenorhabditis briggsae.